We begin with the raw amino-acid sequence, 505 residues long: Glutamyl-tRNA(Gln) amidotransferase subunit A, mitochondrial (505 aa).

Residues K76 and S158 each act as charge relay system in the active site. S182 acts as the Acyl-ester intermediate in catalysis.

Belongs to the amidase family. GatA subfamily. Subunit of the heterotrimeric GatCAB amidotransferase (AdT) complex, composed of A, B and C subunits.

The protein resides in the mitochondrion. It catalyses the reaction L-glutamyl-tRNA(Gln) + L-glutamine + ATP + H2O = L-glutaminyl-tRNA(Gln) + L-glutamate + ADP + phosphate + H(+). Functionally, allows the formation of correctly charged Gln-tRNA(Gln) through the transamidation of misacylated Glu-tRNA(Gln) in the mitochondria. The reaction takes place in the presence of glutamine and ATP through an activated gamma-phospho-Glu-tRNA(Gln). The chain is Glutamyl-tRNA(Gln) amidotransferase subunit A, mitochondrial from Ixodes scapularis (Black-legged tick).